The following is a 462-amino-acid chain: Cysteine--tRNA ligase (462 aa).

Residue Cys28 participates in Zn(2+) binding. The 'HIGH' region signature appears at 30–40 (ITVYDLCHIGH). Positions 210, 235, and 239 each coordinate Zn(2+). A 'KMSKS' region motif is present at residues 267-271 (KMSKS). Residue Lys270 participates in ATP binding.

This sequence belongs to the class-I aminoacyl-tRNA synthetase family. As to quaternary structure, monomer. The cofactor is Zn(2+).

The protein localises to the cytoplasm. The catalysed reaction is tRNA(Cys) + L-cysteine + ATP = L-cysteinyl-tRNA(Cys) + AMP + diphosphate. This is Cysteine--tRNA ligase from Erwinia tasmaniensis (strain DSM 17950 / CFBP 7177 / CIP 109463 / NCPPB 4357 / Et1/99).